A 132-amino-acid polypeptide reads, in one-letter code: Glycine-rich protein 3 (132 aa).

The signal sequence occupies residues Met1–Ala20.

Prismatic layer of shell (at protein level). Expressed primarily in the mantle with highest level in the mantle edge and lower level in the mantle pallium.

The protein resides in the secreted. This chain is Glycine-rich protein 3, found in Pinctada maxima (Silver-lipped pearl oyster).